The sequence spans 163 residues: Transcription elongation factor GreA (163 aa).

A coiled-coil region spans residues 12–73; that stretch reads YEKIQKEFEA…ELSDLLARAQ (62 aa).

The protein belongs to the GreA/GreB family.

Necessary for efficient RNA polymerase transcription elongation past template-encoded arresting sites. The arresting sites in DNA have the property of trapping a certain fraction of elongating RNA polymerases that pass through, resulting in locked ternary complexes. Cleavage of the nascent transcript by cleavage factors such as GreA or GreB allows the resumption of elongation from the new 3'terminus. GreA releases sequences of 2 to 3 nucleotides. The chain is Transcription elongation factor GreA from Nitratiruptor sp. (strain SB155-2).